The primary structure comprises 336 residues: F420-dependent glucose-6-phosphate dehydrogenase (336 aa).

Asp-40 is a binding site for coenzyme F420-(gamma-Glu)n. His-41 serves as the catalytic Proton donor. Coenzyme F420-(gamma-Glu)n is bound by residues Thr-77 and 108 to 109 (TG). The active-site Proton acceptor is Glu-110. Coenzyme F420-(gamma-Glu)n contacts are provided by residues Asn-113, 176–177 (SG), and 179–180 (AA). Positions 194, 197, 258, and 282 each coordinate substrate.

It belongs to the F420-dependent glucose-6-phosphate dehydrogenase family. Homodimer.

It catalyses the reaction oxidized coenzyme F420-(gamma-L-Glu)(n) + D-glucose 6-phosphate + H(+) = 6-phospho-D-glucono-1,5-lactone + reduced coenzyme F420-(gamma-L-Glu)(n). Functionally, catalyzes the coenzyme F420-dependent oxidation of glucose 6-phosphate (G6P) to 6-phosphogluconolactone. In Microbacterium testaceum (strain StLB037), this protein is F420-dependent glucose-6-phosphate dehydrogenase.